Here is a 549-residue protein sequence, read N- to C-terminus: Nectin-3 (549 aa).

An N-terminal signal peptide occupies residues 1–57; the sequence is MARTPGPAPLCPGGGKAQLSSAFPPAAGLLLPAPTPPPLLLLLIPLLLFSRLCGALA. An Ig-like V-type domain is found at 58-165; the sequence is GSIIVEPHVT…GNAQSSTTVT (108 aa). The Extracellular segment spans residues 58–404; that stretch reads GSIIVEPHVT…ATLKDDTIGT (347 aa). N-linked (GlcNAc...) asparagine glycans are attached at residues Asn-73, Asn-83, Asn-125, Asn-186, Asn-222, and Asn-331. Cys-78 and Cys-148 form a disulfide bridge. Ig-like C2-type domains are found at residues 170–258 and 269–354; these read PTVS…KDIR and PEVS…KVIY. Cystine bridges form between Cys-193-Cys-246 and Cys-291-Cys-338. The helical transmembrane segment at 405-425 threads the bilayer; the sequence is IIASVVGGALFLVLVSILAGV. Over 426-549 the chain is Cytoplasmic; the sequence is FCYRRRRTFR…SVISRREWYV (124 aa).

This sequence belongs to the nectin family. As to quaternary structure, cis- and trans-homodimer. Can form trans-heterodimers with NECTIN1, NECTIN2, PVR, IGSF4B/Necl-1 and with IGSF4. Interaction between NECTIN1 and NECTIN3 on the pre- and postsynaptic sites, respectively, initiates the formation of puncta adherentia junctions between axons and dendrites. Interacts (via Cytoplasmic domain) with AFDN, providing a connection with the actin cytoskeleton. Binds with low affinity to TIGIT. In terms of tissue distribution, ubiquitous with high expression in testes. Localized in spermatids at Sertoli-spermatid junctions. Expressed in ovarian granulosa cells, but only faintly expressed after ovulation.

Its subcellular location is the cell membrane. The protein resides in the postsynaptic cell membrane. The protein localises to the cell junction. It localises to the adherens junction. Cell adhesion molecule that promotes cell-cell adhesion through heterophilic trans-interactions with nectins-like or other nectins, such as trans-interaction with NECTIN2 at Sertoli-spermatid junctions. Trans-interaction with PVR induces activation of CDC42 and RAC small G proteins through common signaling molecules such as SRC and RAP1. Induces endocytosis-mediated down-regulation of PVR from the cell surface, resulting in reduction of cell movement and proliferation. Involved in axon guidance by promoting contacts between the commissural axons and the floor plate cells. Also involved in the formation of cell-cell junctions, including adherens junctions and synapses. Promotes formation of checkerboard-like cellular pattern of hair cells and supporting cells in the auditory epithelium via heterophilic interaction with NECTIN1: NECTIN1 is present in the membrane of hair cells and associates with NECTIN3 on supporting cells, thereby mediating heterotypic adhesion between these two cell types. Plays a role in the morphology of the ciliary body. This Mus musculus (Mouse) protein is Nectin-3.